Reading from the N-terminus, the 209-residue chain is Uracil phosphoribosyltransferase (209 aa).

5-phospho-alpha-D-ribose 1-diphosphate is bound by residues R79, R104, and 131-139 (DPMLATGGS). Residues I194 and 199 to 201 (GDA) contribute to the uracil site. D200 is a binding site for 5-phospho-alpha-D-ribose 1-diphosphate.

Belongs to the UPRTase family. Mg(2+) serves as cofactor.

The enzyme catalyses UMP + diphosphate = 5-phospho-alpha-D-ribose 1-diphosphate + uracil. The protein operates within pyrimidine metabolism; UMP biosynthesis via salvage pathway; UMP from uracil: step 1/1. With respect to regulation, allosterically activated by GTP. Catalyzes the conversion of uracil and 5-phospho-alpha-D-ribose 1-diphosphate (PRPP) to UMP and diphosphate. The sequence is that of Uracil phosphoribosyltransferase from Lactobacillus gasseri (strain ATCC 33323 / DSM 20243 / BCRC 14619 / CIP 102991 / JCM 1131 / KCTC 3163 / NCIMB 11718 / NCTC 13722 / AM63).